The following is a 190-amino-acid chain: Transmembrane protein 11, mitochondrial (190 aa).

A run of 2 helical transmembrane segments spans residues 84–100 (VLAG…LPLD) and 107–124 (LPAG…GISW).

This sequence belongs to the TMEM11 family. In terms of assembly, associates with the mitochondrial contact site and cristae organizing system (MICOS) complex, composed of at least MICOS10/MIC10, CHCHD3/MIC19, CHCHD6/MIC25, APOOL/MIC27, IMMT/MIC60, APOO/MIC23/MIC26 and QIL1/MIC13. This complex was also known under the names MINOS or MitOS complex. The MICOS complex associates with mitochondrial outer membrane proteins SAMM50, MTX1, MTX2 and DNAJC11, mitochondrial inner membrane protein TMEM11 and with HSPA9. Interacts with IMMT/MIC60.

Its subcellular location is the mitochondrion inner membrane. In terms of biological role, plays a role in mitochondrial morphogenesis. This chain is Transmembrane protein 11, mitochondrial (Tmem11), found in Mus musculus (Mouse).